The following is a 1367-amino-acid chain: Collagen alpha-1(XV) chain (1367 aa).

Positions M1–A31 are cleaved as a signal peptide. The region spanning S54–F249 is the Laminin G-like domain. Positions R229 to R604 are nonhelical region 1 (NC1). Residues S243 and S247 are each glycosylated (O-linked (Xyl...) (chondroitin sulfate) serine). The segment at A267–G319 is disordered. Residues N305 and N323 are each glycosylated (N-linked (GlcNAc...) asparagine). S341 carries an O-linked (Xyl...) (chondroitin sulfate) serine glycan. N348, N375, and N402 each carry an N-linked (GlcNAc...) asparagine glycan. Disordered regions lie at residues D396–E446 and T529–E784. A compositionally biased stretch (polar residues) spans N402–G429. Residues K434–E446 are compositionally biased toward basic and acidic residues. Residues P555–T564 are compositionally biased toward pro residues. The span at G582–D595 shows a compositional bias: gly residues. 2 Collagen-like domains span residues G605 to G665 and E666 to P717. The segment at G605 to G718 is triple-helical region 1 (COL1). Over residues P606–P616 the composition is skewed to pro residues. N673 is a glycosylation site (N-linked (GlcNAc...) asparagine). A compositionally biased stretch (pro residues) spans M703 to P717. The segment at C719–S748 is nonhelical region 2 (NC2). O-linked (Xyl...) (chondroitin sulfate) serine glycosylation occurs at S730. The span at S737–P750 shows a compositional bias: low complexity. A triple-helical region 2 (COL2) region spans residues G749 to V783. Residues K751–A765 show a composition bias toward basic and acidic residues. A nonhelical region 3 (NC3) region spans residues E784–M807. Residues N792, N795, and N799 are each glycosylated (N-linked (GlcNAc...) asparagine). 2 Collagen-like domains span residues G808 to G850 and K863 to G912. The interval G808–I852 is triple-helical region 3 (COL3). Residues L853–K863 are nonhelical region 4 (NC4). Residues G864–V934 form a triple-helical region 4 (COL4) region. The disordered stretch occupies residues K905–P930. The segment covering P916 to P930 has biased composition (pro residues). The nonhelical region 5 (NC5) stretch occupies residues V935–H968. A triple-helical region 5 (COL5) region spans residues G969–P998. 2 disordered regions span residues K974–D1000 and G1055–L1089. A nonhelical region 6 (NC6) region spans residues V999 to S1031. Residues G1032–P1086 are triple-helical region 6 (COL6). Residues G1055–P1086 show a composition bias toward pro residues. Residues A1087–P1096 form a nonhelical region 7 (NC7) region. Residues G1097–R1111 form a triple-helical region 7 (COL7) region. Residues N1112–K1367 form a nonhelical region 8 (NC8) region. 2 disulfide bridges follow: C1216–C1356 and C1318–C1348.

Belongs to the multiplexin collagen family. Trimer; disulfide-linked. In terms of assembly, interacts moderately with EFEMP2. Post-translationally, prolines at the third position of the tripeptide repeating unit (G-X-Y) are hydroxylated in some or all of the chains. In terms of processing, O-glycosylated; contains chondroitin sulfate. As to expression, detected in testis, brain, heart, kidney, skeletal muscle and skin (at protein level). Detected in heart and skeletal muscle.

Its subcellular location is the secreted. It localises to the extracellular space. The protein resides in the extracellular matrix. Its function is as follows. Structural protein that stabilizes microvessels and muscle cells, both in heart and in skeletal muscle. Restin potently inhibits angiogenesis. The sequence is that of Collagen alpha-1(XV) chain (Col15a1) from Mus musculus (Mouse).